A 767-amino-acid chain; its full sequence is Phosphoribosylformylglycinamidine synthase subunit PurL (767 aa).

Histidine 65 is an active-site residue. Positions 68 and 112 each coordinate ATP. Glutamate 114 contributes to the Mg(2+) binding site. Substrate contacts are provided by residues serine 115–histidine 118 and arginine 137. Histidine 116 serves as the catalytic Proton acceptor. Aspartate 138 is a binding site for Mg(2+). Glutamine 262 provides a ligand contact to substrate. Position 290 (aspartate 290) interacts with Mg(2+). Residue glutamate 334–glutamine 336 participates in substrate binding. Aspartate 522 and glycine 559 together coordinate ATP. Mg(2+) is bound at residue asparagine 560. Position 562 (serine 562) interacts with substrate.

The protein belongs to the FGAMS family. Monomer. Part of the FGAM synthase complex composed of 1 PurL, 1 PurQ and 2 PurS subunits.

It localises to the cytoplasm. It catalyses the reaction N(2)-formyl-N(1)-(5-phospho-beta-D-ribosyl)glycinamide + L-glutamine + ATP + H2O = 2-formamido-N(1)-(5-O-phospho-beta-D-ribosyl)acetamidine + L-glutamate + ADP + phosphate + H(+). It participates in purine metabolism; IMP biosynthesis via de novo pathway; 5-amino-1-(5-phospho-D-ribosyl)imidazole from N(2)-formyl-N(1)-(5-phospho-D-ribosyl)glycinamide: step 1/2. Part of the phosphoribosylformylglycinamidine synthase complex involved in the purines biosynthetic pathway. Catalyzes the ATP-dependent conversion of formylglycinamide ribonucleotide (FGAR) and glutamine to yield formylglycinamidine ribonucleotide (FGAM) and glutamate. The FGAM synthase complex is composed of three subunits. PurQ produces an ammonia molecule by converting glutamine to glutamate. PurL transfers the ammonia molecule to FGAR to form FGAM in an ATP-dependent manner. PurS interacts with PurQ and PurL and is thought to assist in the transfer of the ammonia molecule from PurQ to PurL. This Renibacterium salmoninarum (strain ATCC 33209 / DSM 20767 / JCM 11484 / NBRC 15589 / NCIMB 2235) protein is Phosphoribosylformylglycinamidine synthase subunit PurL.